The chain runs to 739 residues: Nucleoprotein (739 aa).

The tract at residues 1 to 25 (MDSRPQKIWMAPSLTESDMDYHKIL) is oligomerization, N-terminal arm. Positions 26–405 (TAGLSVQQGI…TLRKERLAKL (380 aa)) are NP core. The disordered stretch occupies residues 415–647 (PKTSGHYDDD…DSDNTQSEHS (233 aa)). Low complexity-rich tracts occupy residues 449 to 458 (SQDTTIPDVV) and 504 to 514 (KGGQQKNSQKG). A Host PPP2R5C-binding motif motif is present at residues 562-567 (LTPINE). Positions 567-579 (EEADPLDDADDET) are enriched in acidic residues. A VP30-binding motif motif is present at residues 606-611 (PPAPVY). Over residues 611–638 (YRDHSEKKELPQDEQQDQDHTQEARNQD) the composition is skewed to basic and acidic residues.

Belongs to the filoviruses nucleoprotein family. In terms of assembly, homooligomer. Homomultimerizes to form the nucleocapsid. Binds to viral genomic RNA. Interacts with VP35 and VP30 to form the nucleocapsid. Interacts with host PPP2R5C; this interaction leads to VP30 dephosphorylation and viral transcription. Interacts with VP24; this interaction facilitates nucleocapsid assembly and genome packaging. Interacts with matrix protein VP40; this interaction allows recruitment of the nucleocapsid into progeny virions. Interacts with host STAU1. Interacts with host NXF1 (via RNA-binding domain); this interaction recruits NXF1 to the inclusion bodies were viral replication takes place, probably to export viral mRNA-NXF1 complexes from these sites. Interacts with host CCDC92; this interaction sequesters NP in the host cytoplasm. Interacts with host TRIM14. In terms of processing, phosphorylated by host. Post-translationally, O-glycosylated by host. Acetylated by host EP300 in vitro.

Its subcellular location is the virion. It localises to the host cytoplasm. Oligomerizes into helical capsid to encapsidate the viral genome, protecting it from nucleases and the cellular innate immune response. VP35 binds to and stabilizes monomeric NP, keeping it soluble. Upon virus replication, NP is recruited to bind cooperatively viral genomic RNA and VP35 is released. The encapsidated genomic RNA is termed the nucleocapsid and serves as template for transcription and replication. The nucleocapsid is helical with a pitch of 10.81 NP per turn and a diameter of about 22nm. Each NP binds to six nucleotides of viral genomic RNA, three being exposed to the solvant and three hidden into the nucleocapsid. Also recruits host PPP2R5C phosphatase to dephosphorylate VP30 and thereby promote viral transcription. Upon virion assembly and budding, NP binds to VP24 and possibly host STAU1. The protein is Nucleoprotein (NP) of Epomops franqueti (Franquet's epauletted fruit bat).